A 353-amino-acid polypeptide reads, in one-letter code: Ferrochelatase (353 aa).

Residues 1–13 (MTLERTGRDEEKA) show a composition bias toward basic and acidic residues. The interval 1 to 23 (MTLERTGRDEEKALTQPPSGHSS) is disordered. Fe cation contacts are provided by histidine 223 and glutamate 304.

Belongs to the ferrochelatase family.

It is found in the cytoplasm. The enzyme catalyses heme b + 2 H(+) = protoporphyrin IX + Fe(2+). The protein operates within porphyrin-containing compound metabolism; protoheme biosynthesis; protoheme from protoporphyrin-IX: step 1/1. Functionally, catalyzes the ferrous insertion into protoporphyrin IX. This chain is Ferrochelatase, found in Chelativorans sp. (strain BNC1).